The chain runs to 131 residues: Glycine cleavage system H protein (131 aa).

The Lipoyl-binding domain maps to 24-106 (IATIGISAFA…YGEGWLLKLR (83 aa)). At Lys-65 the chain carries N6-lipoyllysine.

The protein belongs to the GcvH family. As to quaternary structure, the glycine cleavage system is composed of four proteins: P, T, L and H. (R)-lipoate serves as cofactor.

In terms of biological role, the glycine cleavage system catalyzes the degradation of glycine. The H protein shuttles the methylamine group of glycine from the P protein to the T protein. The polypeptide is Glycine cleavage system H protein (Gloeothece citriformis (strain PCC 7424) (Cyanothece sp. (strain PCC 7424))).